A 514-amino-acid polypeptide reads, in one-letter code: Folylpolyglutamate synthase (514 aa).

82–85 contacts ATP; that stretch reads GKGS. Ser-107, Glu-186, and His-214 together coordinate Mg(2+). ATP contacts are provided by Arg-339 and Asp-355.

It belongs to the folylpolyglutamate synthase family. Requires a monovalent cation as cofactor.

The protein resides in the mitochondrion inner membrane. The protein localises to the mitochondrion matrix. Its subcellular location is the cytoplasm. The catalysed reaction is (6S)-5,6,7,8-tetrahydrofolyl-(gamma-L-Glu)(n) + L-glutamate + ATP = (6S)-5,6,7,8-tetrahydrofolyl-(gamma-L-Glu)(n+1) + ADP + phosphate + H(+). Its pathway is cofactor biosynthesis; tetrahydrofolylpolyglutamate biosynthesis. Functionally, catalyzes conversion of folates to polyglutamate derivatives allowing concentration of folate compounds in the cell and the intracellular retention of these cofactors, which are important substrates for most of the folate-dependent enzymes that are involved in one-carbon transfer reactions involved in purine, pyrimidine and amino acid synthesis. The polypeptide is Folylpolyglutamate synthase (MET7) (Candida albicans (Yeast)).